The following is a 348-amino-acid chain: MVRNINETFLKACKGERTDYVPAWYMRQAGRSQPEYRKIKEKYSLFEITHNPELCAYVTKLPVDQYNVDAAILYKDIMSPLPAIGVDVEIKSGIGPVIENPIRSMQDVEKLGEIHPEEDVPYILDTIRLLTAEMLDVPLIGFSGAPFTLASYMIEGGPSRNYHKTKAFMYAEPKAWFALMDKLSDMVIAYLKAQIQAGAKAVQVFDSWVGTVNVADYRIFIKPAMERIFAQVREMNVPMIMHGVGAGHLANEWNDLPLDVVGLDWRLSIEEARTRGIHKAVQGNMDPSLLLAPWNVIEEHVKGILDQGMKQPGYVFNLGHGVFPEVNPDTLKRLTAFIHEYSKEQLAK.

Residues 27–31 (RQAGR), Phe46, Asp76, Tyr152, Ser207, and His320 contribute to the substrate site.

It belongs to the uroporphyrinogen decarboxylase family. Homodimer.

Its subcellular location is the cytoplasm. It catalyses the reaction uroporphyrinogen III + 4 H(+) = coproporphyrinogen III + 4 CO2. It participates in porphyrin-containing compound metabolism; protoporphyrin-IX biosynthesis; coproporphyrinogen-III from 5-aminolevulinate: step 4/4. Catalyzes the decarboxylation of four acetate groups of uroporphyrinogen-III to yield coproporphyrinogen-III. The chain is Uroporphyrinogen decarboxylase from Bacillus cytotoxicus (strain DSM 22905 / CIP 110041 / 391-98 / NVH 391-98).